Here is a 71-residue protein sequence, read N- to C-terminus: Cell division protein ZapB (71 aa).

Positions 5 to 67 (LEVLEQLESK…RALLGKMDQM (63 aa)) form a coiled coil.

It belongs to the ZapB family. Homodimer. The ends of the coiled-coil dimer bind to each other, forming polymers. Interacts with FtsZ.

The protein resides in the cytoplasm. Non-essential, abundant cell division factor that is required for proper Z-ring formation. It is recruited early to the divisome by direct interaction with FtsZ, stimulating Z-ring assembly and thereby promoting cell division earlier in the cell cycle. Its recruitment to the Z-ring requires functional FtsA or ZipA. The chain is Cell division protein ZapB from Aeromonas hydrophila subsp. hydrophila (strain ATCC 7966 / DSM 30187 / BCRC 13018 / CCUG 14551 / JCM 1027 / KCTC 2358 / NCIMB 9240 / NCTC 8049).